An 86-amino-acid polypeptide reads, in one-letter code: Large ribosomal subunit protein bL31B (86 aa).

This sequence belongs to the bacterial ribosomal protein bL31 family. Type B subfamily. In terms of assembly, part of the 50S ribosomal subunit.

In Cupriavidus metallidurans (strain ATCC 43123 / DSM 2839 / NBRC 102507 / CH34) (Ralstonia metallidurans), this protein is Large ribosomal subunit protein bL31B.